We begin with the raw amino-acid sequence, 367 residues long: Glutamate 5-kinase (367 aa).

Lys-10 serves as a coordination point for ATP. Positions 50, 137, and 149 each coordinate substrate. ATP is bound by residues 169–170 (TD) and 211–217 (TGGMSTK). The region spanning 275–353 (AGEITVDEGA…QEIDAILGYE (79 aa)) is the PUA domain.

Belongs to the glutamate 5-kinase family.

The protein localises to the cytoplasm. It catalyses the reaction L-glutamate + ATP = L-glutamyl 5-phosphate + ADP. It functions in the pathway amino-acid biosynthesis; L-proline biosynthesis; L-glutamate 5-semialdehyde from L-glutamate: step 1/2. Catalyzes the transfer of a phosphate group to glutamate to form L-glutamate 5-phosphate. This is Glutamate 5-kinase from Escherichia fergusonii (strain ATCC 35469 / DSM 13698 / CCUG 18766 / IAM 14443 / JCM 21226 / LMG 7866 / NBRC 102419 / NCTC 12128 / CDC 0568-73).